A 480-amino-acid polypeptide reads, in one-letter code: Phosphomethylpyrimidine synthase (480 aa).

Substrate contacts are provided by residues N66, M95, Y124, H159, 179-181 (SRG), 220-223 (DGLR), and E259. H263 serves as a coordination point for Zn(2+). Position 286 (Y286) interacts with substrate. H327 contributes to the Zn(2+) binding site. Positions 407, 410, and 415 each coordinate [4Fe-4S] cluster. The interval 426–480 (DGDMESIEADADDRTPLEDSSAAAVNRPPVGTHDGADIPGPDADMPADTEGSADD) is disordered. Over residues 470 to 480 (MPADTEGSADD) the composition is skewed to acidic residues.

Belongs to the ThiC family. The cofactor is [4Fe-4S] cluster.

It catalyses the reaction 5-amino-1-(5-phospho-beta-D-ribosyl)imidazole + S-adenosyl-L-methionine = 4-amino-2-methyl-5-(phosphooxymethyl)pyrimidine + CO + 5'-deoxyadenosine + formate + L-methionine + 3 H(+). Its pathway is cofactor biosynthesis; thiamine diphosphate biosynthesis. Catalyzes the synthesis of the hydroxymethylpyrimidine phosphate (HMP-P) moiety of thiamine from aminoimidazole ribotide (AIR) in a radical S-adenosyl-L-methionine (SAM)-dependent reaction. This is Phosphomethylpyrimidine synthase from Haloarcula marismortui (strain ATCC 43049 / DSM 3752 / JCM 8966 / VKM B-1809) (Halobacterium marismortui).